A 323-amino-acid chain; its full sequence is MVTILDRTKPDDKRIRHPEKAHKPDTEVLRKPEWIRVKAPTSKGYQETRELVRSHKLVTVCEEAGCPNIGECWEKKHATFMIMGEICTRACAFCNVATGKPNALDREEPANVAKAVRQMGLSHVVITSVDRDDLADGGAEHFEQVIWAIREASPATTIEILTPDFLKKPGALERVVAAKPDVFNHNMETVPGNYLTVRPGARYFHSVRLLQRVKELDPTMFTKSGIMVGLGEERNEVLQLMDDLRTADVDFLTIGQYLQPTRKHHKVERFVTPEEFKSYEDIAYTKGFLMVASSPLTRSSHHAGDDFARLKANREKKLLAAAE.

Positions 1–14 are enriched in basic and acidic residues; that stretch reads MVTILDRTKPDDKR. Positions 1-25 are disordered; the sequence is MVTILDRTKPDDKRIRHPEKAHKPD. C61, C66, C72, C87, C91, C94, and S300 together coordinate [4Fe-4S] cluster. In terms of domain architecture, Radical SAM core spans 73-289; it reads WEKKHATFMI…EDIAYTKGFL (217 aa).

It belongs to the radical SAM superfamily. Lipoyl synthase family. The cofactor is [4Fe-4S] cluster.

The protein localises to the cytoplasm. The catalysed reaction is [[Fe-S] cluster scaffold protein carrying a second [4Fe-4S](2+) cluster] + N(6)-octanoyl-L-lysyl-[protein] + 2 oxidized [2Fe-2S]-[ferredoxin] + 2 S-adenosyl-L-methionine + 4 H(+) = [[Fe-S] cluster scaffold protein] + N(6)-[(R)-dihydrolipoyl]-L-lysyl-[protein] + 4 Fe(3+) + 2 hydrogen sulfide + 2 5'-deoxyadenosine + 2 L-methionine + 2 reduced [2Fe-2S]-[ferredoxin]. The protein operates within protein modification; protein lipoylation via endogenous pathway; protein N(6)-(lipoyl)lysine from octanoyl-[acyl-carrier-protein]: step 2/2. In terms of biological role, catalyzes the radical-mediated insertion of two sulfur atoms into the C-6 and C-8 positions of the octanoyl moiety bound to the lipoyl domains of lipoate-dependent enzymes, thereby converting the octanoylated domains into lipoylated derivatives. The protein is Lipoyl synthase of Allorhizobium ampelinum (strain ATCC BAA-846 / DSM 112012 / S4) (Agrobacterium vitis (strain S4)).